A 286-amino-acid chain; its full sequence is tRNA (guanine-N(7)-)-methyltransferase (286 aa).

S-adenosyl-L-methionine is bound by residues Glu91, Glu116, Asn143, and Asp165. Asp165 is a catalytic residue. Residues Lys169, Asp201, and 262–265 (TNFE) each bind substrate.

This sequence belongs to the class I-like SAM-binding methyltransferase superfamily. TrmB family.

It catalyses the reaction guanosine(46) in tRNA + S-adenosyl-L-methionine = N(7)-methylguanosine(46) in tRNA + S-adenosyl-L-homocysteine. Its pathway is tRNA modification; N(7)-methylguanine-tRNA biosynthesis. Functionally, catalyzes the formation of N(7)-methylguanine at position 46 (m7G46) in tRNA. This is tRNA (guanine-N(7)-)-methyltransferase from Bifidobacterium longum subsp. infantis (strain ATCC 15697 / DSM 20088 / JCM 1222 / NCTC 11817 / S12).